The primary structure comprises 428 residues: Tryptophan synthase beta chain (428 aa).

K100 bears the N6-(pyridoxal phosphate)lysine mark.

This sequence belongs to the TrpB family. As to quaternary structure, tetramer of two alpha and two beta chains. Pyridoxal 5'-phosphate is required as a cofactor.

The enzyme catalyses (1S,2R)-1-C-(indol-3-yl)glycerol 3-phosphate + L-serine = D-glyceraldehyde 3-phosphate + L-tryptophan + H2O. It functions in the pathway amino-acid biosynthesis; L-tryptophan biosynthesis; L-tryptophan from chorismate: step 5/5. The beta subunit is responsible for the synthesis of L-tryptophan from indole and L-serine. This chain is Tryptophan synthase beta chain, found in Streptomyces griseus subsp. griseus (strain JCM 4626 / CBS 651.72 / NBRC 13350 / KCC S-0626 / ISP 5235).